The following is a 1485-amino-acid chain: Dicer-like protein 2 (1485 aa).

Residues 1–11 (MSSQDESASSS) are compositionally biased toward low complexity. The interval 1-61 (MSSQDESASS…EPQPSGNGPR (61 aa)) is disordered. The 179-residue stretch at 72–250 (MFQASMQQNI…MEDLESSLDS (179 aa)) folds into the Helicase ATP-binding domain. 85 to 92 (MDTGSGKT) is an ATP binding site. The DEAH box motif lies at 193 to 196 (DEAH). The Helicase C-terminal domain occupies 415-579 (KLQVLLRILR…RYENDMRELD (165 aa)). One can recognise a Dicer dsRNA-binding fold domain in the interval 609–712 (AKGHLEHFCR…LPIRESDFVD (104 aa)). RNase III domains lie at 988–1127 (AQEL…IEGG) and 1168–1358 (LGPL…VDSG). Mg(2+) is bound by residues glutamate 1208, aspartate 1344, and glutamate 1347. Residues 1388-1469 (HPKEELGRVA…ALEVIRVWEE (82 aa)) form the DRBM domain.

It belongs to the helicase family. Dicer subfamily. Mg(2+) is required as a cofactor. Mn(2+) serves as cofactor.

In terms of biological role, dicer-like endonuclease involved in cleaving double-stranded RNA in the RNA interference (RNAi) pathway. Produces 21 to 25 bp dsRNAs (siRNAs) which target the selective destruction of homologous RNAs leading to sequence-specific suppression of gene expression, called post-transcriptional gene silencing (PTGS). Part of a broad host defense response against viral infection and transposons. This chain is Dicer-like protein 2 (DCL2), found in Pyricularia oryzae (strain 70-15 / ATCC MYA-4617 / FGSC 8958) (Rice blast fungus).